A 230-amino-acid chain; its full sequence is Cytidylate kinase (230 aa).

10–18 (GFSSTGKST) is a binding site for ATP.

Belongs to the cytidylate kinase family. Type 1 subfamily.

It localises to the cytoplasm. It catalyses the reaction CMP + ATP = CDP + ADP. The catalysed reaction is dCMP + ATP = dCDP + ADP. In Flavobacterium johnsoniae (strain ATCC 17061 / DSM 2064 / JCM 8514 / BCRC 14874 / CCUG 350202 / NBRC 14942 / NCIMB 11054 / UW101) (Cytophaga johnsonae), this protein is Cytidylate kinase.